The following is a 478-amino-acid chain: Islet cell autoantigen 1 (478 aa).

Residues 50 to 253 (ASDADLDAKL…TSHTMAAIHE (204 aa)) form the AH domain. Residues 306 to 317 (EHKDSSAYKTEE) are compositionally biased toward basic and acidic residues. 2 disordered regions span residues 306-365 (EHKD…SGDK) and 398-422 (LKEP…GFLP).

Predominantly expressed in brain, pancreas and stomach mucosa. High expression also found in stomach muscle and testis.

It localises to the cytoplasm. The protein resides in the cytosol. The protein localises to the golgi apparatus membrane. It is found in the cytoplasmic vesicle. Its subcellular location is the secretory vesicle membrane. It localises to the secretory vesicle. The protein resides in the synaptic vesicle membrane. Its function is as follows. May play a role in neurotransmitter secretion. This Mus musculus (Mouse) protein is Islet cell autoantigen 1.